The chain runs to 248 residues: UPF0246 protein MYPE6270 (248 aa).

This sequence belongs to the UPF0246 family.

The polypeptide is UPF0246 protein MYPE6270 (Malacoplasma penetrans (strain HF-2) (Mycoplasma penetrans)).